The primary structure comprises 405 residues: Caspase-1 (405 aa).

One can recognise a CARD domain in the interval 1–91 (MADKVLKEKR…HLAETLRLSS (91 aa)). Residues 1-119 (MADKVLKEKR…SSPALQAMPD (119 aa)) constitute a propeptide that is removed on maturation. Catalysis depends on residues His-238 and Cys-286. Residues 299 to 317 (STGTSGNSSSLAPDDFEDD) constitute a propeptide that is removed on maturation. At Ser-303 the chain carries Phosphoserine.

This sequence belongs to the peptidase C14A family. In terms of assembly, heterotetramer that consists of two anti-parallel arranged heterodimers, each one formed by a 20 kDa (Caspase-1 subunit p20) and a 10 kDa (Caspase-1 subunit p10) subunit. May be a component of the inflammasome, a protein complex which also includes PYCARD, CARD8 and NLRP2 and whose function would be the activation of pro-inflammatory caspases. Component of the AIM2 PANoptosome complex, a multiprotein complex that drives inflammatory cell death (PANoptosis). Both the p10 and p20 subunits interact with MEFV. Interacts with CARD17P/INCA and CARD18. Interacts with SERPINB1; this interaction regulates CASP1 activity. Heterotetramer that consists of two anti-parallel arranged heterodimers, each one formed by a 20 kDa (Caspase-1 subunit p20) and a 10 kDa (Caspase-1 subunit p10) subunit. In terms of processing, the two subunits are derived from the precursor sequence by an autocatalytic mechanism. Ubiquitinated via 'Lys-11'-linked polyubiquitination. Deubiquitinated by USP8.

The protein resides in the cytoplasm. It localises to the cell membrane. The catalysed reaction is Strict requirement for an Asp residue at position P1 and has a preferred cleavage sequence of Tyr-Val-Ala-Asp-|-.. Functionally, thiol protease involved in a variety of inflammatory processes by proteolytically cleaving other proteins, such as the precursors of the inflammatory cytokines interleukin-1 beta (IL1B) and interleukin 18 (IL18) as well as the pyroptosis inducer Gasdermin-D (GSDMD), into active mature peptides. Plays a key role in cell immunity as an inflammatory response initiator: once activated through formation of an inflammasome complex, it initiates a pro-inflammatory response through the cleavage of the two inflammatory cytokines IL1B and IL18, releasing the mature cytokines which are involved in a variety of inflammatory processes. Cleaves a tetrapeptide after an Asp residue at position P1. Also initiates pyroptosis, a programmed lytic cell death pathway, through cleavage of GSDMD. In contrast to cleavage of interleukin IL1B, recognition and cleavage of GSDMD is not strictly dependent on the consensus cleavage site but depends on an exosite interface on CASP1 that recognizes and binds the Gasdermin-D, C-terminal (GSDMD-CT) part. Cleaves and activates CASP7 in response to bacterial infection, promoting plasma membrane repair. Upon inflammasome activation, during DNA virus infection but not RNA virus challenge, controls antiviral immunity through the cleavage of CGAS, rendering it inactive. In apoptotic cells, cleaves SPHK2 which is released from cells and remains enzymatically active extracellularly. The polypeptide is Caspase-1 (CASP1) (Equus caballus (Horse)).